Here is a 158-residue protein sequence, read N- to C-terminus: Small t antigen (158 aa).

Methionine 1 carries the N-acetylmethionine; by host modification. The J domain occupies 12–75 (RLMHLLKLPM…LPCLSTQDFI (64 aa)). The C4-type; atypical zinc finger occupies 95-106 (CNFENCNKCLYC). The H1C3-type; atypical zinc-finger motif lies at 112–130 (HKSDPPFPKVWGYCLCYKC).

Interacts with host PPP2R1A; the interaction inhibits PP2A activity.

It localises to the host cytoplasm. The protein localises to the host nucleus. Its function is as follows. Promotes efficient viral genome replication by accelerating both G1 and S phase progression of the cell cycle. Inhibits host PP2A by binding to the A subunit, thereby displacing lower affinity regulatory B subunit. Inactivation of PP2A in turn results in the transactivation of cyclin A and cyclin D1 promoters. Late during the infection cycle, ST may induce dephosphorylation of host MTOR, leading to the inhibition of cap-dependent translation. May establish and maintain high levels of viral genomes during persistent infection in cell culture. This Mus musculus (Mouse) protein is Small t antigen.